The chain runs to 495 residues: MANILSLETLLISWLSSFILMFFILKWVSFYSKTKKNLPPSPQKLPIIGNFHQLGPNPHRSLQALSEKHGPIMLLHLGSVPMLVASNSEVAQEIMKTHDVSFASRPNSPILNILLYGCKDIAFAPSGEYWRQLKSIIVSNLLSSTQVKSFKNVREKEIGHMIGVIGESYGSSVDMSALLVSLAENVICTVALGRKFDGLKLTSLLRRYLSMFNLFSVGSYIPWLSWVDQLSGLTGRATKVVKEFDEFLEVIIEDHANAKINGGKDFIDMLLNAQQDQTTGFAFQRDTIKAVIFDIFGGGIDSVSTSIDWVMSELVKHPNVMKKLQKEVTEISQGRSMVAEEDLEKMQYLKAVIKESWRLHPPVPLLIPRKSTNDVKLMGYDIQAGTQVMVNVWQIGRDPTLWDEPNEFRPERFSKGSVNYSGLNFEWLPFGVGRRACPGTQFGAAVIELAIANIVYKFDLALPNGVKHEDLDMSEKYGITVHRKNPLLVTASPRF.

The next 2 helical transmembrane spans lie at 4–24 and 208–228; these read ILSL…MFFI and YLSM…SWVD. The N-linked (GlcNAc...) asparagine glycan is linked to Asn419. Cys437 contacts heme.

It belongs to the cytochrome P450 family. The cofactor is heme.

Its subcellular location is the membrane. Its pathway is secondary metabolite biosynthesis; terpenoid biosynthesis. Probably involved in the biosynthesis of germacrene-derived sesquiterpene lactones. In Tanacetum parthenium (Feverfew), this protein is Cytochrome P450 Tp4149.